Consider the following 71-residue polypeptide: Conotoxin PnMEKL-032 (71 aa).

A signal peptide spans 1–19 (MQKLIILLLVAAVLMSTQA). A propeptide spanning residues 20–46 (LFQEKRLKEKINFLSKEKADAEKQQKR) is cleaved from the precursor. Intrachain disulfides connect Cys48–Cys62, Cys55–Cys66, and Cys61–Cys70.

Belongs to the conotoxin O2 superfamily. As to expression, expressed by the venom duct.

Its subcellular location is the secreted. This is Conotoxin PnMEKL-032 from Conus pennaceus (Feathered cone).